The sequence spans 76 residues: Large ribosomal subunit protein bL31 (76 aa).

The protein belongs to the bacterial ribosomal protein bL31 family. Type A subfamily. Part of the 50S ribosomal subunit.

Binds the 23S rRNA. This chain is Large ribosomal subunit protein bL31, found in Gluconacetobacter diazotrophicus (strain ATCC 49037 / DSM 5601 / CCUG 37298 / CIP 103539 / LMG 7603 / PAl5).